Reading from the N-terminus, the 161-residue chain is MPKEVIVESFELDHTIVKAPYVRLISEEFGPQGDVITNFDVRLVQPNQAAIETAGLHTIEHLLAKLIRQRIDGMIDCSPFGCRTGFHLIMWGKHSSTDIAKIITSSLEEIATSITWEDVPGTTIESCGNYKDHSLFAAKEWAQLILKQGISDDPFNRHVTS.

Fe cation is bound by residues H57, H61, and C127.

The protein belongs to the LuxS family. In terms of assembly, homodimer. The cofactor is Fe cation.

It catalyses the reaction S-(5-deoxy-D-ribos-5-yl)-L-homocysteine = (S)-4,5-dihydroxypentane-2,3-dione + L-homocysteine. Involved in the synthesis of autoinducer 2 (AI-2) which is secreted by bacteria and is used to communicate both the cell density and the metabolic potential of the environment. The regulation of gene expression in response to changes in cell density is called quorum sensing. Catalyzes the transformation of S-ribosylhomocysteine (RHC) to homocysteine (HC) and 4,5-dihydroxy-2,3-pentadione (DPD). The polypeptide is S-ribosylhomocysteine lyase (Streptococcus equi subsp. equi (strain 4047)).